The chain runs to 559 residues: MRRLSSWRKMATAEKQKHDGRVKIGHYILGDTLGVGTFGKVKVGKHELTGHKVAVKILNRQKIRSLDVVGKIRREIQNLKLFRHPHIIKLYQVISTPSDIFMVMEYVSGGELFDYICKNGRLDEKESRRLFQQILSGVDYCHRHMVVHRDLKPENVLLDAHMNAKIADFGLSNMMSDGEFLRTSCGSPNYAAPEVISGRLYAGPEVDIWSSGVILYALLCGTLPFDDDHVPTLFKKICDGIFYTPQYLNPSVISLLKHMLQVDPMKRATIKDIREHEWFKQDLPKYLFPEDPSYSSTMIDDEALKEVCEKFECSEEEVLSCLYNRNHQDPLAVAYHLIIDNRRIMNEAKDFYLATSPPDSFLDDHHLTRPHPERVPFLVAETPRARHTLDELNPQKSKHQGVRKAKWHLGIRSQSRPNDIMAEVCRAIKQLDYEWKVVNPYYLRVRRKNPVTSTFSKMSLQLYQVDSRTYLLDFRSIDDEITEAKSGTATPQRSGSISNYRSCQRSDSDAEAQGKPSEVSLTSSVTSLDSSPVDVAPRPGSHTIEFFEMCANLIKILAQ.

The 253-residue stretch at 27–279 (YILGDTLGVG…IKDIREHEWF (253 aa)) folds into the Protein kinase domain. The residue at position 32 (Thr-32) is a Phosphothreonine. Residues 33–41 (LGVGTFGKV) and Lys-56 each bind ATP. Asp-150 acts as the Proton acceptor in catalysis. Residue Thr-183 is modified to Phosphothreonine; by LKB1 and CaMKK2. 2 positions are modified to phosphothreonine: Thr-269 and Thr-355. Positions 302-381 (EALKEVCEKF…PERVPFLVAE (80 aa)) are AIS. Ser-356 is modified (phosphoserine). Phosphoserine; by ULK1 is present on Ser-360. Position 368 is a phosphothreonine; by ULK1 (Thr-368). Phosphothreonine is present on Thr-382. Position 397 is a phosphoserine; by ULK1 (Ser-397). Residues Ser-467 and Ser-486 each carry the phosphoserine modification. The disordered stretch occupies residues 484 to 536 (AKSGTATPQRSGSISNYRSCQRSDSDAEAQGKPSEVSLTSSVTSLDSSPVDVA). A compositionally biased stretch (polar residues) spans 485–505 (KSGTATPQRSGSISNYRSCQR). Ser-486 is subject to Phosphoserine; by ULK1. At Thr-488 the chain carries Phosphothreonine; by ULK1. At Thr-490 the chain carries Phosphothreonine. Ser-496, Ser-508, Ser-524, and Ser-527 each carry phosphoserine. Residues 516–535 (PSEVSLTSSVTSLDSSPVDV) show a composition bias toward low complexity.

The protein belongs to the protein kinase superfamily. CAMK Ser/Thr protein kinase family. SNF1 subfamily. AMPK is a heterotrimer of an alpha catalytic subunit (PRKAA1 or PRKAA2), a beta (PRKAB1 or PRKAB2) and a gamma non-catalytic subunits (PRKAG1, PRKAG2 or PRKAG3). Interacts with FNIP1 and FNIP2. Mg(2+) is required as a cofactor. Post-translationally, ubiquitinated. Phosphorylated at Thr-183 by STK11/LKB1 in complex with STE20-related adapter-alpha (STRADA) pseudo kinase and CAB39. Also phosphorylated at Thr-183 by CAMKK2; triggered by a rise in intracellular calcium ions, without detectable changes in the AMP/ATP ratio. CAMKK1 can also phosphorylate Thr-183, but at a much lower level. Dephosphorylated by protein phosphatase 2A and 2C (PP2A and PP2C). Phosphorylated by ULK1 and ULK2; leading to negatively regulate AMPK activity and suggesting the existence of a regulatory feedback loop between ULK1, ULK2 and AMPK. There is some ambiguity for some phosphosites: Ser-360/Thr-368 and Ser-486/Thr-488. Dephosphorylated by PPM1A and PPM1B. In terms of processing, glycosylated; O-GlcNAcylated by OGT, promoting the AMP-activated protein kinase (AMPK) activity. Low expression in kidney, liver, lung, heart and brain.

The protein localises to the cytoplasm. Its subcellular location is the nucleus. It catalyses the reaction L-seryl-[protein] + ATP = O-phospho-L-seryl-[protein] + ADP + H(+). The enzyme catalyses L-threonyl-[protein] + ATP = O-phospho-L-threonyl-[protein] + ADP + H(+). It carries out the reaction L-seryl-[acetyl-CoA carboxylase] + ATP = O-phospho-L-seryl-[acetyl-CoA carboxylase] + ADP + H(+). The catalysed reaction is L-seryl-[3-hydroxy-3-methylglutaryl-coenzyme A reductase] + ATP = O-phospho-L-seryl-[3-hydroxy-3-methylglutaryl-coenzyme A reductase] + ADP + H(+). It catalyses the reaction L-seryl-[tau protein] + ATP = O-phospho-L-seryl-[tau protein] + ADP + H(+). The enzyme catalyses L-threonyl-[tau protein] + ATP = O-phospho-L-threonyl-[tau protein] + ADP + H(+). Activated by phosphorylation on Thr-183. Binding of AMP to non-catalytic gamma subunit (PRKAG1, PRKAG2 or PRKAG3) results in allosteric activation, inducing phosphorylation on Thr-183. AMP-binding to gamma subunit also sustains activity by preventing dephosphorylation of Thr-183. ADP also stimulates Thr-183 phosphorylation, without stimulating already phosphorylated AMPK. ATP promotes dephosphorylation of Thr-183, rendering the enzyme inactive. Under physiological conditions AMPK mainly exists in its inactive form in complex with ATP, which is much more abundant than AMP. Selectively inhibited by compound C (6-[4-(2-Piperidin-1-yl-ethoxy)-phenyl)]-3-pyridin-4-yl-pyyrazolo[1,5-a] pyrimidine. Activated by resveratrol, a natural polyphenol present in red wine, and S17834, a synthetic polyphenol. In terms of biological role, catalytic subunit of AMP-activated protein kinase (AMPK), an energy sensor protein kinase that plays a key role in regulating cellular energy metabolism. In response to reduction of intracellular ATP levels, AMPK activates energy-producing pathways and inhibits energy-consuming processes: inhibits protein, carbohydrate and lipid biosynthesis, as well as cell growth and proliferation. AMPK acts via direct phosphorylation of metabolic enzymes, and by longer-term effects via phosphorylation of transcription regulators. Regulates lipid synthesis by phosphorylating and inactivating lipid metabolic enzymes such as ACACA, ACACB, GYS1, HMGCR and LIPE; regulates fatty acid and cholesterol synthesis by phosphorylating acetyl-CoA carboxylase (ACACA and ACACB) and hormone-sensitive lipase (LIPE) enzymes, respectively. Promotes lipolysis of lipid droplets by mediating phosphorylation of isoform 1 of CHKA (CHKalpha2). Regulates insulin-signaling and glycolysis by phosphorylating IRS1, PFKFB2 and PFKFB3. AMPK stimulates glucose uptake in muscle by increasing the translocation of the glucose transporter SLC2A4/GLUT4 to the plasma membrane, possibly by mediating phosphorylation of TBC1D4/AS160. Regulates transcription and chromatin structure by phosphorylating transcription regulators involved in energy metabolism such as CRTC2/TORC2, FOXO3, histone H2B, HDAC5, MEF2C, MLXIPL/ChREBP, EP300, HNF4A, p53/TP53, SREBF1, SREBF2 and PPARGC1A. Acts as a key regulator of glucose homeostasis in liver by phosphorylating CRTC2/TORC2, leading to CRTC2/TORC2 sequestration in the cytoplasm. In response to stress, phosphorylates 'Ser-36' of histone H2B (H2BS36ph), leading to promote transcription. Acts as a key regulator of cell growth and proliferation by phosphorylating FNIP1, TSC2, RPTOR, WDR24 and ATG1/ULK1: in response to nutrient limitation, negatively regulates the mTORC1 complex by phosphorylating RPTOR component of the mTORC1 complex and by phosphorylating and activating TSC2. Also phosphorylates and inhibits GATOR2 subunit WDR24 in response to nutrient limitation, leading to suppress glucose-mediated mTORC1 activation. In response to energetic stress, phosphorylates FNIP1, inactivating the non-canonical mTORC1 signaling, thereby promoting nuclear translocation of TFEB and TFE3, and inducing transcription of lysosomal or autophagy genes. In response to nutrient limitation, promotes autophagy by phosphorylating and activating ATG1/ULK1. In that process, it also activates WDR45/WIPI4. Phosphorylates CASP6, thereby preventing its autoprocessing and subsequent activation. In response to nutrient limitation, phosphorylates transcription factor FOXO3 promoting FOXO3 mitochondrial import. Also acts as a regulator of cellular polarity by remodeling the actin cytoskeleton; probably by indirectly activating myosin. AMPK also acts as a regulator of circadian rhythm by mediating phosphorylation of CRY1, leading to destabilize it. May regulate the Wnt signaling pathway by phosphorylating CTNNB1, leading to stabilize it. Also has tau-protein kinase activity: in response to amyloid beta A4 protein (APP) exposure, activated by CAMKK2, leading to phosphorylation of MAPT/TAU; however the relevance of such data remains unclear in vivo. Also phosphorylates CFTR, EEF2K, KLC1, NOS3 and SLC12A1. Regulates hepatic lipogenesis. Activated via SIRT3, represses sterol regulatory element-binding protein (SREBP) transcriptional activities and ATP-consuming lipogenesis to restore cellular energy balance. Upon stress, regulates mitochondrial fragmentation through phosphorylation of MTFR1L. The chain is 5'-AMP-activated protein kinase catalytic subunit alpha-1 (Prkaa1) from Rattus norvegicus (Rat).